We begin with the raw amino-acid sequence, 130 residues long: Large ribosomal subunit protein bL21 (130 aa).

The tract at residues 103 to 130 is disordered; it reads AGGKTSKAEPRKTRKAEPAAESAPAAAE. Over residues 108-120 the composition is skewed to basic and acidic residues; it reads SKAEPRKTRKAEP. Low complexity predominate over residues 121–130; that stretch reads AAESAPAAAE.

Belongs to the bacterial ribosomal protein bL21 family. As to quaternary structure, part of the 50S ribosomal subunit. Contacts protein L20.

Functionally, this protein binds to 23S rRNA in the presence of protein L20. This is Large ribosomal subunit protein bL21 from Methylorubrum extorquens (strain CM4 / NCIMB 13688) (Methylobacterium extorquens).